The chain runs to 595 residues: UvrABC system protein C (595 aa).

Positions 14–91 (SNPGCYLHKD…IQENMPKFNI (78 aa)) constitute a GIY-YIG domain. The UVR domain occupies 196–231 (DKIVNQLKAKMKDMSDQMEFERAAEYRDLIEAVSTL).

It belongs to the UvrC family. As to quaternary structure, interacts with UvrB in an incision complex.

It is found in the cytoplasm. Its function is as follows. The UvrABC repair system catalyzes the recognition and processing of DNA lesions. UvrC both incises the 5' and 3' sides of the lesion. The N-terminal half is responsible for the 3' incision and the C-terminal half is responsible for the 5' incision. This Streptococcus thermophilus (strain CNRZ 1066) protein is UvrABC system protein C.